A 330-amino-acid polypeptide reads, in one-letter code: Ferrochelatase (330 aa).

Residues H200 and E281 each contribute to the Fe cation site.

This sequence belongs to the ferrochelatase family.

It is found in the cytoplasm. The catalysed reaction is heme b + 2 H(+) = protoporphyrin IX + Fe(2+). Its pathway is porphyrin-containing compound metabolism; protoheme biosynthesis; protoheme from protoporphyrin-IX: step 1/1. Functionally, catalyzes the ferrous insertion into protoporphyrin IX. In Marinomonas sp. (strain MWYL1), this protein is Ferrochelatase.